We begin with the raw amino-acid sequence, 97 residues long: Large ribosomal subunit protein eL37 (97 aa).

Position 10 is an N6-acetyllysine (K10). Zn(2+) contacts are provided by C19, C22, C34, and C37. Residues 19 to 37 (CRRCGSKAYHLQKSTCGKC) form a C4-type zinc finger. Residues S96 and S97 each carry the phosphoserine modification.

The protein belongs to the eukaryotic ribosomal protein eL37 family. In terms of assembly, component of the large ribosomal subunit.

The protein localises to the cytoplasm. In terms of biological role, component of the large ribosomal subunit. The ribosome is a large ribonucleoprotein complex responsible for the synthesis of proteins in the cell. The chain is Large ribosomal subunit protein eL37 (RPL37) from Bos taurus (Bovine).